Reading from the N-terminus, the 410-residue chain is Tryptophan synthase beta chain (410 aa).

Lys100 carries the N6-(pyridoxal phosphate)lysine modification.

It belongs to the TrpB family. In terms of assembly, tetramer of two alpha and two beta chains. Pyridoxal 5'-phosphate is required as a cofactor.

It catalyses the reaction (1S,2R)-1-C-(indol-3-yl)glycerol 3-phosphate + L-serine = D-glyceraldehyde 3-phosphate + L-tryptophan + H2O. Its pathway is amino-acid biosynthesis; L-tryptophan biosynthesis; L-tryptophan from chorismate: step 5/5. The beta subunit is responsible for the synthesis of L-tryptophan from indole and L-serine. In Pyrobaculum aerophilum (strain ATCC 51768 / DSM 7523 / JCM 9630 / CIP 104966 / NBRC 100827 / IM2), this protein is Tryptophan synthase beta chain.